The sequence spans 232 residues: Rho-related GTP-binding protein Rho6 (232 aa).

GTP contacts are provided by residues 23–28, 38–45, 67–71, 125–128, and 169–170; these read QCGKTA, YPETYVPT, DTSGS, CKTD, and AF. The Effector region signature appears at 42-50; it reads YVPTVFENY. Cys-229 bears the Cysteine methyl ester mark. Cys-229 carries the S-geranylgeranyl cysteine lipid modification. A propeptide spans 230–232 (removed in mature form); it reads SIM.

The protein belongs to the small GTPase superfamily. Rho family. In terms of assembly, binds GRB7 and PLXNB1. Interacts with UBXD5. Interacts with PLXNA2. As to expression, mostly expressed in brain and liver.

It localises to the cell membrane. The protein resides in the cytoplasm. Its subcellular location is the cytoskeleton. Functionally, lacks intrinsic GTPase activity. Has a low affinity for GDP, and constitutively binds GTP. Controls rearrangements of the actin cytoskeleton. Induces the Rac-dependent neuritic process formation in part by disruption of the cortical actin filaments. Causes the formation of many neuritic processes from the cell body with disruption of the cortical actin filaments. In Homo sapiens (Human), this protein is Rho-related GTP-binding protein Rho6 (RND1).